The following is a 488-amino-acid chain: UDP-N-acetylmuramoyl-L-alanyl-D-glutamate--2,6-diaminopimelate ligase (488 aa).

UDP-N-acetyl-alpha-D-muramoyl-L-alanyl-D-glutamate contacts are provided by residues Leu-24, Ser-26, and 41-43 (HQV). 113 to 119 (GTNGKTT) is a binding site for ATP. UDP-N-acetyl-alpha-D-muramoyl-L-alanyl-D-glutamate is bound by residues Asn-154, 155–156 (TT), Ser-182, Gln-188, and Arg-190. Lys-222 carries the N6-carboxylysine modification. Meso-2,6-diaminopimelate-binding positions include Arg-386, 410–413 (DNPR), Gly-461, and Glu-465. Residues 410–413 (DNPR) carry the Meso-diaminopimelate recognition motif motif.

It belongs to the MurCDEF family. MurE subfamily. It depends on Mg(2+) as a cofactor. Carboxylation is probably crucial for Mg(2+) binding and, consequently, for the gamma-phosphate positioning of ATP.

It is found in the cytoplasm. The enzyme catalyses UDP-N-acetyl-alpha-D-muramoyl-L-alanyl-D-glutamate + meso-2,6-diaminopimelate + ATP = UDP-N-acetyl-alpha-D-muramoyl-L-alanyl-gamma-D-glutamyl-meso-2,6-diaminopimelate + ADP + phosphate + H(+). It functions in the pathway cell wall biogenesis; peptidoglycan biosynthesis. In terms of biological role, catalyzes the addition of meso-diaminopimelic acid to the nucleotide precursor UDP-N-acetylmuramoyl-L-alanyl-D-glutamate (UMAG) in the biosynthesis of bacterial cell-wall peptidoglycan. This Haemophilus influenzae (strain PittEE) protein is UDP-N-acetylmuramoyl-L-alanyl-D-glutamate--2,6-diaminopimelate ligase.